The following is a 392-amino-acid chain: Formate-dependent phosphoribosylglycinamide formyltransferase (392 aa).

N(1)-(5-phospho-beta-D-ribosyl)glycinamide-binding positions include 22 to 23 (EL) and E82. ATP contacts are provided by residues R114, K155, 160–165 (SSGKGQ), 195–198 (EGVV), and E203. Residues 119–308 (RLAAEELQLP…EFALHVRAFL (190 aa)) enclose the ATP-grasp domain. E267 and E279 together coordinate Mg(2+). Residues D286, K355, and 362–363 (RR) each bind N(1)-(5-phospho-beta-D-ribosyl)glycinamide.

Belongs to the PurK/PurT family. Homodimer.

It catalyses the reaction N(1)-(5-phospho-beta-D-ribosyl)glycinamide + formate + ATP = N(2)-formyl-N(1)-(5-phospho-beta-D-ribosyl)glycinamide + ADP + phosphate + H(+). The protein operates within purine metabolism; IMP biosynthesis via de novo pathway; N(2)-formyl-N(1)-(5-phospho-D-ribosyl)glycinamide from N(1)-(5-phospho-D-ribosyl)glycinamide (formate route): step 1/1. In terms of biological role, involved in the de novo purine biosynthesis. Catalyzes the transfer of formate to 5-phospho-ribosyl-glycinamide (GAR), producing 5-phospho-ribosyl-N-formylglycinamide (FGAR). Formate is provided by PurU via hydrolysis of 10-formyl-tetrahydrofolate. The sequence is that of Formate-dependent phosphoribosylglycinamide formyltransferase from Shigella flexneri.